The chain runs to 885 residues: MTTLSPEAFAGHTPMMQQYLRIKADHPDTLVFYRMGDFYELFFEDAEKAARLLDLTLTQRGASAGTPIKMAGVPHHAVEQYLAKLVKMGESVAICEQIGDPATSKGPVERKVVRVVTPGTLTDAALLSDKNDVYLLAMCTGHNKRGVAVNIGLAWLNLASGALRLAEIEPDQLAAALERIRPAEILTPDGATDAIPAGAGASKRVPAWHFDIASGTQRLCDQLDVASLDGFGAHSLTSACGAAGALLLYAAATQGQQLRHVRSLKVENETEYIGLDPATRRNLELTETLRGTESPTLYSLLDTCCTTMGSRLLRHWLHHPPRASVAAQSRQQAIGALLDAPANASLDALRSALRQIADVERITGRLALLSARPRDLSSLRDTFAALPALRERIGAIVANADALARVDAALAPPAECLDLLTSAIAPEPAAMVRDGGVIARGYDAELDELRDISENCGQFLIDLEARERARTGIANLRVEYNKVHGFYIEVTRGQTDKVPDDYRRRQTLKNAERYITPELKTFEDKALSAQERALARERALYDSVLQALLPFIPECQRVASALAELDLLAAFAERARALDWVAPTFTDEIGIEIEQGRHPVVEAQVEQFIANDCRFGTERKLLLITGPNMGGKSTFMRQTALIALMAYVGSYVPAKSACFGPIDRIFTRIGAADDLAGGRSTFMVEMTEAAAILNDATPQSLVLMDEIGRGTSTFDGLALAWAIARHLLAHNACYTLFATHYFELTQLPAEFPQAANVHLSAVEHGHGIVFLHAVNEGPANQSYGLQVAQLAGVPAPVIRAARKHLAYLEQQSASQHTPQLDLFSAPPAAVDDLECADAPALPDTPHPALEKLRDIDPDDLKPREALDLLYELRTLVRSHDADGHA.

An ATP-binding site is contributed by 626-633 (GPNMGGKS).

The protein belongs to the DNA mismatch repair MutS family.

This protein is involved in the repair of mismatches in DNA. It is possible that it carries out the mismatch recognition step. This protein has a weak ATPase activity. The sequence is that of DNA mismatch repair protein MutS from Burkholderia cenocepacia (strain HI2424).